Reading from the N-terminus, the 599-residue chain is Elongation factor 4 (599 aa).

The 183-residue stretch at 2 to 184 (KNIRNFSIIA…RLVRDIPPPE (183 aa)) folds into the tr-type G domain. GTP is bound by residues 14 to 19 (DHGKST) and 131 to 134 (NKID).

It belongs to the TRAFAC class translation factor GTPase superfamily. Classic translation factor GTPase family. LepA subfamily.

Its subcellular location is the cell inner membrane. The catalysed reaction is GTP + H2O = GDP + phosphate + H(+). Functionally, required for accurate and efficient protein synthesis under certain stress conditions. May act as a fidelity factor of the translation reaction, by catalyzing a one-codon backward translocation of tRNAs on improperly translocated ribosomes. Back-translocation proceeds from a post-translocation (POST) complex to a pre-translocation (PRE) complex, thus giving elongation factor G a second chance to translocate the tRNAs correctly. Binds to ribosomes in a GTP-dependent manner. This Shigella dysenteriae serotype 1 (strain Sd197) protein is Elongation factor 4.